The sequence spans 256 residues: N-glycosylase/DNA lyase (256 aa).

8-oxoguanine is bound by residues glutamine 31, serine 58, and tryptophan 69. The helix-hairpin-helix stretch occupies residues 125-184 (TLRQLSHIVGARREQKTLVFTIKILNYAYMCSRGVNRVLPFDIPIPVDYRVARLTWCAGL). The active-site Schiff-base intermediate with DNA is lysine 140. Residues phenylalanine 144 and proline 170 each contribute to the 8-oxoguanine site. Aspartate 172 is a catalytic residue. The 8-oxoguanine site is built by aspartate 218 and tryptophan 222.

The protein belongs to the archaeal N-glycosylase/DNA lyase (AGOG) family.

The catalysed reaction is 2'-deoxyribonucleotide-(2'-deoxyribose 5'-phosphate)-2'-deoxyribonucleotide-DNA = a 3'-end 2'-deoxyribonucleotide-(2,3-dehydro-2,3-deoxyribose 5'-phosphate)-DNA + a 5'-end 5'-phospho-2'-deoxyribonucleoside-DNA + H(+). DNA repair enzyme that is part of the base excision repair (BER) pathway; protects from oxidative damage by removing the major product of DNA oxidation, 8-oxoguanine (GO), from single- and double-stranded DNA substrates. The chain is N-glycosylase/DNA lyase from Pyrobaculum aerophilum (strain ATCC 51768 / DSM 7523 / JCM 9630 / CIP 104966 / NBRC 100827 / IM2).